The chain runs to 494 residues: Alpha-amylase-related protein (494 aa).

Positions 1-20 (MFKFAAAVILCLVAASSTLA) are cleaved as a signal peptide. Pyrrolidone carboxylic acid is present on Gln-21. An intrachain disulfide couples Cys-48 to Cys-104. Ca(2+) is bound by residues Asn-118, Gln-169, and Asp-178. A disulfide bridge links Cys-157 with Cys-171. Arg-206 contacts chloride. The active-site Nucleophile is Asp-208. His-212 lines the Ca(2+) pocket. Residue Glu-245 is the Proton donor of the active site. Chloride contacts are provided by Asn-308 and Arg-343. Intrachain disulfides connect Cys-376-Cys-382, Cys-418-Cys-441, and Cys-448-Cys-460.

This sequence belongs to the glycosyl hydrolase 13 family. As to quaternary structure, monomer. Requires Ca(2+) as cofactor. Chloride is required as a cofactor.

Its subcellular location is the secreted. The catalysed reaction is Endohydrolysis of (1-&gt;4)-alpha-D-glucosidic linkages in polysaccharides containing three or more (1-&gt;4)-alpha-linked D-glucose units.. This chain is Alpha-amylase-related protein (Amyrel), found in Drosophila atripex (Fruit fly).